Here is a 162-residue protein sequence, read N- to C-terminus: MNCPDCGNGRTRVIDTGASSDGASVRRRRECQRCSFRFTTYERPEWKSLQVKKRDGTIESFDQQKLRTGIERAVEKRGVAETTVTALVDDIESELQDREARIVSSSLIGELVSENLRTLDKVAYIRFVSVYKAFSEPQEFLKELDAVLGAELDDFEASNSSQ.

Residues 1-21 (MNCPDCGNGRTRVIDTGASSD) form a disordered region. The segment at 3–34 (CPDCGNGRTRVIDTGASSDGASVRRRRECQRC) is a zinc-finger region. The region spanning 49–139 (LQVKKRDGTI…VYKAFSEPQE (91 aa)) is the ATP-cone domain.

The protein belongs to the NrdR family. Zn(2+) serves as cofactor.

Its function is as follows. Negatively regulates transcription of bacterial ribonucleotide reductase nrd genes and operons by binding to NrdR-boxes. This chain is Transcriptional repressor NrdR, found in Natronomonas pharaonis (strain ATCC 35678 / DSM 2160 / CIP 103997 / JCM 8858 / NBRC 14720 / NCIMB 2260 / Gabara) (Halobacterium pharaonis).